A 247-amino-acid polypeptide reads, in one-letter code: Large ribosomal subunit protein uL30 (247 aa).

It belongs to the universal ribosomal protein uL30 family.

This Sus scrofa (Pig) protein is Large ribosomal subunit protein uL30 (RPL7L1).